The following is a 283-amino-acid chain: Diaminopimelate epimerase (283 aa).

Residues N13, Q46, and N66 each coordinate substrate. Catalysis depends on C75, which acts as the Proton donor. Residues 76 to 77 (GN), N166, N199, and 217 to 218 (ER) contribute to the substrate site. C226 functions as the Proton acceptor in the catalytic mechanism. 227–228 (GT) provides a ligand contact to substrate.

The protein belongs to the diaminopimelate epimerase family. In terms of assembly, homodimer.

It is found in the cytoplasm. It catalyses the reaction (2S,6S)-2,6-diaminopimelate = meso-2,6-diaminopimelate. The protein operates within amino-acid biosynthesis; L-lysine biosynthesis via DAP pathway; DL-2,6-diaminopimelate from LL-2,6-diaminopimelate: step 1/1. In terms of biological role, catalyzes the stereoinversion of LL-2,6-diaminopimelate (L,L-DAP) to meso-diaminopimelate (meso-DAP), a precursor of L-lysine and an essential component of the bacterial peptidoglycan. The protein is Diaminopimelate epimerase of Herminiimonas arsenicoxydans.